The sequence spans 245 residues: 4-hydroxy-tetrahydrodipicolinate reductase (245 aa).

Residues 7 to 12 (GAKGKV), 75 to 77 (GTT), and 102 to 105 (APNF) contribute to the NAD(+) site. Histidine 132 (proton donor/acceptor) is an active-site residue. Histidine 133 contributes to the (S)-2,3,4,5-tetrahydrodipicolinate binding site. The Proton donor role is filled by lysine 136. 142 to 143 (GT) lines the (S)-2,3,4,5-tetrahydrodipicolinate pocket.

Belongs to the DapB family.

It is found in the cytoplasm. The enzyme catalyses (S)-2,3,4,5-tetrahydrodipicolinate + NAD(+) + H2O = (2S,4S)-4-hydroxy-2,3,4,5-tetrahydrodipicolinate + NADH + H(+). The catalysed reaction is (S)-2,3,4,5-tetrahydrodipicolinate + NADP(+) + H2O = (2S,4S)-4-hydroxy-2,3,4,5-tetrahydrodipicolinate + NADPH + H(+). Its pathway is amino-acid biosynthesis; L-lysine biosynthesis via DAP pathway; (S)-tetrahydrodipicolinate from L-aspartate: step 4/4. Catalyzes the conversion of 4-hydroxy-tetrahydrodipicolinate (HTPA) to tetrahydrodipicolinate. The chain is 4-hydroxy-tetrahydrodipicolinate reductase from Mycobacterium bovis (strain BCG / Pasteur 1173P2).